The primary structure comprises 275 residues: Ammonia transport outward protein 3 (275 aa).

Residues 1–84 lie on the Extracellular side of the membrane; sequence MTSSASSPQD…NCAKYTPHQF (84 aa). Ser-4 is subject to Phosphoserine. Residues 85 to 105 form a helical membrane-spanning segment; sequence ANPVPLGLASFSLSCLVLSLI. At 106–120 the chain is on the cytoplasmic side; sequence NANVRGVTDGKWALS. Residues 121 to 141 traverse the membrane as a helical segment; sequence LFMFFGGAIELFAGLLCFVIG. Over 142 to 181 the chain is Extracellular; that stretch reads DTYAMTVFSSFGGFWICYGYGLTDTDNLVSGYTDPTMLNN. The chain crosses the membrane as a helical span at residues 182 to 202; that stretch reads VIGFFLAGWTVFTFLMLMCTL. The Cytoplasmic portion of the chain corresponds to 203–207; that stretch reads KSTWG. The chain crosses the membrane as a helical span at residues 208–228; sequence LFLLLTFLDLTFLLLCIGTFI. At 229–236 the chain is on the extracellular side; sequence DNNNLKMA. The chain crosses the membrane as a helical span at residues 237-257; that stretch reads GGYFGILSSCCGWYSLYCSVV. The Cytoplasmic portion of the chain corresponds to 258-275; sequence SPSNSYLAFRAHTMPNAP.

The protein belongs to the acetate uptake transporter (AceTr) (TC 2.A.96) family.

It is found in the cell membrane. Functionally, transporter protein required for ammonia export. Induced in rho(0) cells, probably to eliminate the excess ammonia that arises because of a potential defect in ammonia assimilation in those cells. The chain is Ammonia transport outward protein 3 (ATO3) from Saccharomyces cerevisiae (strain ATCC 204508 / S288c) (Baker's yeast).